We begin with the raw amino-acid sequence, 245 residues long: DNA polymerase sliding clamp (245 aa).

Belongs to the PCNA family. In terms of assembly, homotrimer. The subunits circularize to form a toroid; DNA passes through its center. Replication factor C (RFC) is required to load the toroid on the DNA.

Its function is as follows. Sliding clamp subunit that acts as a moving platform for DNA processing. Responsible for tethering the catalytic subunit of DNA polymerase and other proteins to DNA during high-speed replication. The sequence is that of DNA polymerase sliding clamp from Methanosarcina barkeri (strain Fusaro / DSM 804).